A 570-amino-acid chain; its full sequence is Cytoplasmic polyadenylation element-binding protein 2 (570 aa).

The region spanning 434–516 (LVAFIGGVPR…KRVEIKPYFF (83 aa)) is the RRM domain.

As to expression, expressed specifically in the spermatogenic germ line.

Cytoplasmic polyadenylation element binding protein that binds to and regulates the translation of specific mRNAs. Not required for oogenesis. The chain is Cytoplasmic polyadenylation element-binding protein 2 (cpb-2) from Caenorhabditis elegans.